A 1089-amino-acid chain; its full sequence is Carbamoyl phosphate synthase large chain (1089 aa).

Residues 1-399 (MPKRTDIKSI…SIQKALCSLE (399 aa)) form a carboxyphosphate synthetic domain region. Positions 127, 167, 173, 174, 206, 208, 213, 239, 240, 241, 283, and 297 each coordinate ATP. In terms of domain architecture, ATP-grasp 1 spans 131–326 (KECMKKIGMD…IAKVATLLAV (196 aa)). Residues glutamine 283, glutamate 297, and asparagine 299 each contribute to the Mg(2+) site. Mn(2+) contacts are provided by glutamine 283, glutamate 297, and asparagine 299. The tract at residues 400–553 (RSLSGFDRVK…NVSELTQSKN (154 aa)) is oligomerization domain. Residues 554–951 (DAKDKKEKKV…SYAKSQIASF (398 aa)) are carbamoyl phosphate synthetic domain. One can recognise an ATP-grasp 2 domain in the interval 680–871 (AEFITKLGIN…LAKVATRVMW (192 aa)). Residues arginine 716, glutamine 755, leucine 757, glutamate 762, glycine 787, isoleucine 788, histidine 789, serine 790, glutamine 830, and glutamate 842 each coordinate ATP. The Mg(2+) site is built by glutamine 830, glutamate 842, and asparagine 844. The Mn(2+) site is built by glutamine 830, glutamate 842, and asparagine 844. One can recognise an MGS-like domain in the interval 952–1089 (NHLPEQGVVF…VKSLQEWLKS (138 aa)). The tract at residues 952–1089 (NHLPEQGVVF…VKSLQEWLKS (138 aa)) is allosteric domain.

It belongs to the CarB family. In terms of assembly, composed of two chains; the small (or glutamine) chain promotes the hydrolysis of glutamine to ammonia, which is used by the large (or ammonia) chain to synthesize carbamoyl phosphate. Tetramer of heterodimers (alpha,beta)4. Mg(2+) is required as a cofactor. Mn(2+) serves as cofactor.

The catalysed reaction is hydrogencarbonate + L-glutamine + 2 ATP + H2O = carbamoyl phosphate + L-glutamate + 2 ADP + phosphate + 2 H(+). The enzyme catalyses hydrogencarbonate + NH4(+) + 2 ATP = carbamoyl phosphate + 2 ADP + phosphate + 2 H(+). The protein operates within amino-acid biosynthesis; L-arginine biosynthesis; carbamoyl phosphate from bicarbonate: step 1/1. It participates in pyrimidine metabolism; UMP biosynthesis via de novo pathway; (S)-dihydroorotate from bicarbonate: step 1/3. Functionally, large subunit of the glutamine-dependent carbamoyl phosphate synthetase (CPSase). CPSase catalyzes the formation of carbamoyl phosphate from the ammonia moiety of glutamine, carbonate, and phosphate donated by ATP, constituting the first step of 2 biosynthetic pathways, one leading to arginine and/or urea and the other to pyrimidine nucleotides. The large subunit (synthetase) binds the substrates ammonia (free or transferred from glutamine from the small subunit), hydrogencarbonate and ATP and carries out an ATP-coupled ligase reaction, activating hydrogencarbonate by forming carboxy phosphate which reacts with ammonia to form carbamoyl phosphate. This chain is Carbamoyl phosphate synthase large chain, found in Campylobacter jejuni subsp. jejuni serotype O:2 (strain ATCC 700819 / NCTC 11168).